A 239-amino-acid polypeptide reads, in one-letter code: Superoxide dismutase 1 copper chaperone (239 aa).

Residues 7–70 (FYEATYAVPM…ALRDCGRDAI (64 aa)) enclose the HMA domain. Positions 18 and 21 each coordinate Cu cation. A disulfide bridge links C28 with C65. Residue D163 coordinates Zn(2+). Cu cation is bound by residues C219 and C221.

This sequence belongs to the CCS1 family. It depends on Cu(2+) as a cofactor.

It localises to the cytoplasm. Copper chaperone for superoxide dismutase 1 (SOD1). Binds copper ions and delivers them specifically to SOD1. The polypeptide is Superoxide dismutase 1 copper chaperone (CCS1) (Candida glabrata (strain ATCC 2001 / BCRC 20586 / JCM 3761 / NBRC 0622 / NRRL Y-65 / CBS 138) (Yeast)).